A 301-amino-acid polypeptide reads, in one-letter code: Transposase InsD for insertion element IS2D (301 aa).

Residues 106–289 (KPAVPPSKRA…SPREYLRQRA (184 aa)) form the Integrase catalytic domain.

Involved in the transposition of the insertion sequence IS2. The polypeptide is Transposase InsD for insertion element IS2D (insD2) (Escherichia coli (strain K12)).